Reading from the N-terminus, the 251-residue chain is Triosephosphate isomerase (251 aa).

9–11 contacts substrate; sequence NWK. H95 functions as the Electrophile in the catalytic mechanism. E167 acts as the Proton acceptor in catalysis. Substrate is bound by residues G173, S212, and 233-234; that span reads GG.

It belongs to the triosephosphate isomerase family. In terms of assembly, homodimer.

The protein resides in the cytoplasm. It catalyses the reaction D-glyceraldehyde 3-phosphate = dihydroxyacetone phosphate. It functions in the pathway carbohydrate biosynthesis; gluconeogenesis. Its pathway is carbohydrate degradation; glycolysis; D-glyceraldehyde 3-phosphate from glycerone phosphate: step 1/1. Its function is as follows. Involved in the gluconeogenesis. Catalyzes stereospecifically the conversion of dihydroxyacetone phosphate (DHAP) to D-glyceraldehyde-3-phosphate (G3P). This is Triosephosphate isomerase from Pseudomonas paraeruginosa (strain DSM 24068 / PA7) (Pseudomonas aeruginosa (strain PA7)).